Consider the following 331-residue polypeptide: Adenosine deaminase (331 aa).

Zn(2+) contacts are provided by His-12 and His-14. His-14 and Asp-16 together coordinate substrate. His-197 is a Zn(2+) binding site. Glu-200 acts as the Proton donor in catalysis. Asp-278 is a binding site for Zn(2+).

It belongs to the metallo-dependent hydrolases superfamily. Adenosine and AMP deaminases family. Adenosine deaminase subfamily. It depends on Zn(2+) as a cofactor.

The catalysed reaction is adenosine + H2O + H(+) = inosine + NH4(+). The enzyme catalyses 2'-deoxyadenosine + H2O + H(+) = 2'-deoxyinosine + NH4(+). Its function is as follows. Catalyzes the hydrolytic deamination of adenosine and 2-deoxyadenosine. The chain is Adenosine deaminase from Shewanella pealeana (strain ATCC 700345 / ANG-SQ1).